Consider the following 498-residue polypeptide: Polyphosphate:AMP phosphotransferase (498 aa).

PPK2 stretches follow at residues 11 to 234 and 269 to 491; these read IDDD…MQAA and LSKE…LEKA.

Belongs to the polyphosphate kinase 2 (PPK2) family. Class II subfamily.

The catalysed reaction is [phosphate](n) + ADP = [phosphate](n+1) + AMP. Its function is as follows. Uses inorganic polyphosphate (polyP) as a donor to convert AMP to ADP. Can also convert GMP to GDP, with lower efficiency. In Pseudomonas syringae pv. tomato (strain ATCC BAA-871 / DC3000), this protein is Polyphosphate:AMP phosphotransferase.